The chain runs to 329 residues: Anthranilate phosphoribosyltransferase (329 aa).

5-phospho-alpha-D-ribose 1-diphosphate is bound by residues Gly78, 81–82 (GD), Thr86, 88–91 (NLST), 106–114 (KHGNRSASG), and Ser118. Gly78 lines the anthranilate pocket. Mg(2+) is bound at residue Ser90. Asn109 serves as a coordination point for anthranilate. Arg164 contacts anthranilate. Residues Asp221 and Glu222 each coordinate Mg(2+).

It belongs to the anthranilate phosphoribosyltransferase family. Homodimer. Requires Mg(2+) as cofactor.

The catalysed reaction is N-(5-phospho-beta-D-ribosyl)anthranilate + diphosphate = 5-phospho-alpha-D-ribose 1-diphosphate + anthranilate. It participates in amino-acid biosynthesis; L-tryptophan biosynthesis; L-tryptophan from chorismate: step 2/5. Its function is as follows. Catalyzes the transfer of the phosphoribosyl group of 5-phosphorylribose-1-pyrophosphate (PRPP) to anthranilate to yield N-(5'-phosphoribosyl)-anthranilate (PRA). The sequence is that of Anthranilate phosphoribosyltransferase from Pyrobaculum islandicum (strain DSM 4184 / JCM 9189 / GEO3).